Here is a 230-residue protein sequence, read N- to C-terminus: 7-cyano-7-deazaguanine synthase (230 aa).

Position 14–24 (14–24 (LSGGLDSTTTL)) interacts with ATP. The Zn(2+) site is built by Cys194, Cys204, Cys207, and Cys210.

The protein belongs to the QueC family. It depends on Zn(2+) as a cofactor.

It catalyses the reaction 7-carboxy-7-deazaguanine + NH4(+) + ATP = 7-cyano-7-deazaguanine + ADP + phosphate + H2O + H(+). It functions in the pathway purine metabolism; 7-cyano-7-deazaguanine biosynthesis. Functionally, catalyzes the ATP-dependent conversion of 7-carboxy-7-deazaguanine (CDG) to 7-cyano-7-deazaguanine (preQ(0)). This is 7-cyano-7-deazaguanine synthase from Ruthia magnifica subsp. Calyptogena magnifica.